Here is an 804-residue protein sequence, read N- to C-terminus: Probable copper-exporting P-type ATPase (804 aa).

The Cytoplasmic segment spans residues 1–101 (MVKDTYISSA…VEHLSRMKRK (101 aa)). The 67-residue stretch at 16–82 (MERTVRVTGM…VIEDLGYGVV (67 aa)) folds into the HMA 1 domain. 2 residues coordinate Cu(+): Cys27 and Cys30. A helical membrane pass occupies residues 102 to 122 (LYVAAFAGVLLLFLAHFISLP). Residues 123 to 128 (YEDFVQ) lie on the Extracellular side of the membrane. A helical transmembrane segment spans residues 129 to 149 (LLIALPAIFYSGSSIFKAAFS). The Cytoplasmic segment spans residues 150-159 (ALRRRTLNMD). A helical membrane pass occupies residues 160–180 (VMYSMGVGAAFLASVLSTAGV). At 181-186 (LPREYS) the chain is on the extracellular side. A helical transmembrane segment spans residues 187–204 (FYETSVLLLAFLLLGRTL). Topologically, residues 205–339 (EARAKSRTGE…PIQRLADKVV (135 aa)) are cytoplasmic. The helical transmembrane segment at 340-360 (AYFIPTVLLVAISAFIYWYFI) threads the bilayer. At 361 to 364 (AHAP) the chain is on the extracellular side. Residues 365–385 (LLFAFTTLIAVLVVACPCAFG) form a helical membrane-spanning segment. Residues 386-680 (LATPTALTVG…KIKQNIFWAL (295 aa)) lie on the Cytoplasmic side of the membrane. Catalysis depends on Asp424, which acts as the 4-aspartylphosphate intermediate. ATP contacts are provided by residues 457–462 (ERRSEH) and 490–501 (GEGVVADGILVG). Residues Asp618 and Asp622 each coordinate Mg(2+). Residues 681-701 (IYNVILIPAAAGLLYPIFGVV) traverse the membrane as a helical segment. The Extracellular segment spans residues 702 to 704 (FRP). A helical membrane pass occupies residues 705–725 (EFAGLAMAMSSVSVVANSLLL). Topologically, residues 726-804 (RNYVPPIRRG…AAGYQAKLRS (79 aa)) are cytoplasmic. One can recognise an HMA 2 domain in the interval 740–801 (EKIVLELSGL…AVEAAGYQAK (62 aa)). Residues Cys751 and Cys754 each coordinate Cu(+).

It belongs to the cation transport ATPase (P-type) (TC 3.A.3) family. Type IB subfamily. As to quaternary structure, interacts with CopZ probably in the CopZ Cu(+)-bound form.

Its subcellular location is the cell membrane. It catalyses the reaction Cu(+)(in) + ATP + H2O = Cu(+)(out) + ADP + phosphate + H(+). Its activity is regulated as follows. Activated by Cu(+) and Ag(+) and inhibited by vanadate. Activated by CopZ in its Cu(+)-bound form. Its function is as follows. Probably involved in copper and silver export. This is Probable copper-exporting P-type ATPase (copA) from Archaeoglobus fulgidus (strain ATCC 49558 / DSM 4304 / JCM 9628 / NBRC 100126 / VC-16).